The sequence spans 304 residues: MQFSEELLTLKDQVRFDKSFKVGKYDKIVIAGMGGSGIAGRIFSEIYDEKPVFLVDDYDIPSFVDDKTEFIAISYSGNTEETISASEEAAKKHANVHAITSGGSLSKMGFDTIIIPSGLQPRSSIGYLLMPLVNTFIKPKIGDVDEAYRLLSETDKDNEEEKSIASEIYNGEHIPVIYGSRPFRAIAYRWKTQFNENAKVLAYSNYFSELNHNDTMPLKDTYRKDEFYFLVFRSDDSRFSKRITVTEKITGNSFRMVDVRGSSLLAKLFYLIHFGDYLTYHLAELRGVDPQDVSLIEKLKKEIA.

The 132-residue stretch at 16–147 (FDKSFKVGKY…KPKIGDVDEA (132 aa)) folds into the SIS domain. Positions 35, 36, 74, 76, 79, and 122 each coordinate D-fructose 6-phosphate. Glutamate 196 (proton acceptor) is an active-site residue. Histidine 212 and lysine 300 together coordinate D-fructose 6-phosphate. Residue histidine 212 is the Proton donor of the active site. The Proton acceptor role is filled by lysine 300.

This sequence belongs to the PGI/PMI family. In terms of assembly, homodimer.

It catalyses the reaction alpha-D-glucose 6-phosphate = beta-D-fructose 6-phosphate. It carries out the reaction D-mannose 6-phosphate = D-fructose 6-phosphate. Dual specificity isomerase that catalyzes the isomerization of both glucose-6-phosphate and mannose-6-phosphate to fructose-6-phosphate. In Thermoplasma volcanium (strain ATCC 51530 / DSM 4299 / JCM 9571 / NBRC 15438 / GSS1), this protein is Bifunctional phosphoglucose/phosphomannose isomerase.